We begin with the raw amino-acid sequence, 491 residues long: Glutamyl-tRNA(Gln) amidotransferase subunit A (491 aa).

Residues lysine 78 and serine 158 each act as charge relay system in the active site. Serine 182 serves as the catalytic Acyl-ester intermediate.

It belongs to the amidase family. GatA subfamily. As to quaternary structure, heterotrimer of A, B and C subunits.

It carries out the reaction L-glutamyl-tRNA(Gln) + L-glutamine + ATP + H2O = L-glutaminyl-tRNA(Gln) + L-glutamate + ADP + phosphate + H(+). Functionally, allows the formation of correctly charged Gln-tRNA(Gln) through the transamidation of misacylated Glu-tRNA(Gln) in organisms which lack glutaminyl-tRNA synthetase. The reaction takes place in the presence of glutamine and ATP through an activated gamma-phospho-Glu-tRNA(Gln). The protein is Glutamyl-tRNA(Gln) amidotransferase subunit A of Nitrobacter winogradskyi (strain ATCC 25391 / DSM 10237 / CIP 104748 / NCIMB 11846 / Nb-255).